Reading from the N-terminus, the 123-residue chain is Integration host factor subunit alpha (123 aa).

Residues 97-123 are disordered; that stretch reads NANGSAPSMSSSASAVDDDKSESASRT. The segment covering 98-111 has biased composition (low complexity); the sequence is ANGSAPSMSSSASA. Over residues 113 to 123 the composition is skewed to basic and acidic residues; sequence DDDKSESASRT.

It belongs to the bacterial histone-like protein family. Heterodimer of an alpha and a beta chain.

In terms of biological role, this protein is one of the two subunits of integration host factor, a specific DNA-binding protein that functions in genetic recombination as well as in transcriptional and translational control. The chain is Integration host factor subunit alpha from Rhodopseudomonas palustris (strain BisB5).